A 449-amino-acid chain; its full sequence is Heterogeneous nuclear ribonucleoprotein H2 (449 aa).

Position 1 is an N-acetylmethionine (Met-1). An N-acetylmethionine; in Heterogeneous nuclear ribonucleoprotein H2, N-terminally processed modification is found at Met-2. The 80-residue stretch at 11–90 folds into the RRM 1 domain; that stretch reads FVVKVRGLPW…RYVEVFKSNS (80 aa). Ser-23 is subject to Phosphoserine. Lys-35 participates in a covalent cross-link: Glycyl lysine isopeptide (Lys-Gly) (interchain with G-Cter in SUMO2). Phosphoserine is present on residues Ser-54 and Ser-63. Residue Lys-87 forms a Glycyl lysine isopeptide (Lys-Gly) (interchain with G-Cter in SUMO2) linkage. At Ser-90 the chain carries Phosphoserine. Lys-98 participates in a covalent cross-link: Glycyl lysine isopeptide (Lys-Gly) (interchain with G-Cter in SUMO2). In terms of domain architecture, RRM 2 spans 111–188; the sequence is GFVRLRGLPF…RYIEIFKSSR (78 aa). Arg-233 carries the dimethylated arginine; alternate modification. Position 233 is an omega-N-methylarginine; alternate (Arg-233). The 1-1 repeat unit spans residues 234–249; sequence GAYGGGYGGYDDYGGY. Residues 234–433 are 2 X 16 AA Gly-rich approximate repeats; the sequence is GAYGGGYGGY…YGGQSSMSGY (200 aa). At Tyr-246 the chain carries Phosphotyrosine. Positions 289–364 constitute an RRM 3 domain; it reads HCVHMRGLPY…RYVELFLNST (76 aa). A Phosphoserine modification is found at Ser-310. 3 repeat units span residues 354 to 372, 374 to 392, and 418 to 433. Residues 354-392 are 2 X 19 AA perfect repeats; the sequence is HRYVELFLNSTAGTSGGAYDHSYVELFLNSTAGASGGAY.

In terms of assembly, component of a ribonucleoprotein complex containing mRNAs and RNA-binding proteins including DDX5, HNRNPH2 and SRSF1 as well as splicing regulator ARVCF. Interacts with TXNL4/DIM1.

The protein localises to the nucleus. It is found in the nucleoplasm. Its function is as follows. This protein is a component of the heterogeneous nuclear ribonucleoprotein (hnRNP) complexes which provide the substrate for the processing events that pre-mRNAs undergo before becoming functional, translatable mRNAs in the cytoplasm. Binds poly(RG). The sequence is that of Heterogeneous nuclear ribonucleoprotein H2 (Hnrnph2) from Rattus norvegicus (Rat).